A 169-amino-acid polypeptide reads, in one-letter code: Peptide deformylase (169 aa).

C91 and H133 together coordinate Fe cation. Residue E134 is part of the active site. H137 is a binding site for Fe cation.

The protein belongs to the polypeptide deformylase family. Requires Fe(2+) as cofactor.

The catalysed reaction is N-terminal N-formyl-L-methionyl-[peptide] + H2O = N-terminal L-methionyl-[peptide] + formate. Its function is as follows. Removes the formyl group from the N-terminal Met of newly synthesized proteins. Requires at least a dipeptide for an efficient rate of reaction. N-terminal L-methionine is a prerequisite for activity but the enzyme has broad specificity at other positions. The polypeptide is Peptide deformylase (Salmonella arizonae (strain ATCC BAA-731 / CDC346-86 / RSK2980)).